Consider the following 623-residue polypeptide: V-type proton ATPase catalytic subunit A (623 aa).

Residue 252–259 (GAFGCGKT) coordinates ATP.

Belongs to the ATPase alpha/beta chains family. As to quaternary structure, V-ATPase is a heteromultimeric enzyme composed of a peripheral catalytic V1 complex (main components: subunits A, B, C, D, E, and F) attached to an integral membrane V0 proton pore complex (main component: the proteolipid protein).

It catalyses the reaction ATP + H2O + 4 H(+)(in) = ADP + phosphate + 5 H(+)(out). In terms of biological role, catalytic subunit of the peripheral V1 complex of vacuolar ATPase. V-ATPase vacuolar ATPase is responsible for acidifying a variety of intracellular compartments in eukaryotic cells. The protein is V-type proton ATPase catalytic subunit A (CVA69.24) of Gossypium hirsutum (Upland cotton).